We begin with the raw amino-acid sequence, 366 residues long: Phospho-N-acetylmuramoyl-pentapeptide-transferase (366 aa).

10 consecutive transmembrane segments (helical) span residues 27 to 47, 71 to 91, 93 to 113, 138 to 158, 174 to 194, 205 to 225, 245 to 265, 268 to 288, 297 to 317, and 343 to 363; these read AALFTSALIVFLFGPAMIASL, TPTMGGLMILTGIVVSSLLWA, LSSIYVVSTLLVTLGFGAIGF, FVIAAVAVFFMMQAALSAGAA, LMLNLGYFFVLFGGFVIVGAG, GLAIVPVMIASAAFGLIAYLA, LAVILGAVIGAGLGFLWFNAP, AIFMGDTGSLALGGLIGTVAV, IIIGGLFVIETLSVIIQVFWF, and QVVIRFWIIAVILAMVGLSTL.

Belongs to the glycosyltransferase 4 family. MraY subfamily. The cofactor is Mg(2+).

It localises to the cell inner membrane. The catalysed reaction is UDP-N-acetyl-alpha-D-muramoyl-L-alanyl-gamma-D-glutamyl-meso-2,6-diaminopimeloyl-D-alanyl-D-alanine + di-trans,octa-cis-undecaprenyl phosphate = di-trans,octa-cis-undecaprenyl diphospho-N-acetyl-alpha-D-muramoyl-L-alanyl-D-glutamyl-meso-2,6-diaminopimeloyl-D-alanyl-D-alanine + UMP. It participates in cell wall biogenesis; peptidoglycan biosynthesis. Functionally, catalyzes the initial step of the lipid cycle reactions in the biosynthesis of the cell wall peptidoglycan: transfers peptidoglycan precursor phospho-MurNAc-pentapeptide from UDP-MurNAc-pentapeptide onto the lipid carrier undecaprenyl phosphate, yielding undecaprenyl-pyrophosphoryl-MurNAc-pentapeptide, known as lipid I. The chain is Phospho-N-acetylmuramoyl-pentapeptide-transferase from Rhizobium meliloti (strain 1021) (Ensifer meliloti).